The primary structure comprises 212 residues: Secreted and transmembrane protein 1b (212 aa).

Residues 1-28 (MLAYSVTSSGLFPRMLWALLLLAASLNA) form the signal peptide. At 29–160 (HNDVWDEPCC…DKPPTAVRTE (132 aa)) the chain is on the extracellular side. Cysteines 38 and 55 form a disulfide. 4 N-linked (GlcNAc...) asparagine glycosylation sites follow: N56, N85, N114, and N130. A helical transmembrane segment spans residues 161-181 (VIIIIAIATTIIITGIGVFVW). Over 182-212 (YKQFPVAPQIQMSVPCLIHGSPGIPYLTLPP) the chain is Cytoplasmic.

Belongs to the SECTM family. In terms of assembly, interacts with CD7.

The protein resides in the cell membrane. It localises to the secreted. Its function is as follows. May be involved in thymocyte signaling. The polypeptide is Secreted and transmembrane protein 1b (Sectm1b) (Mus musculus (Mouse)).